The following is a 151-amino-acid chain: Large ribosomal subunit protein uL22 (151 aa).

The tract at residues 1–25 is disordered; it reads MARINYSVKEDPETTSKAMGSELHI.

It belongs to the universal ribosomal protein uL22 family. As to quaternary structure, part of the 50S ribosomal subunit.

This protein binds specifically to 23S rRNA. It makes multiple contacts with different domains of the 23S rRNA in the assembled 50S subunit and ribosome. In terms of biological role, the globular domain of the protein is located near the polypeptide exit tunnel on the outside of the subunit, while an extended beta-hairpin is found that lines the wall of the exit tunnel in the center of the 70S ribosome. In Methanosarcina barkeri (strain Fusaro / DSM 804), this protein is Large ribosomal subunit protein uL22.